We begin with the raw amino-acid sequence, 568 residues long: Urease subunit beta (568 aa).

A Urease domain is found at 131–568; that stretch reads GGIDTHIHFI…LSLAQLYNLF (438 aa). Residues His136, His138, and Lys219 each contribute to the Ni(2+) site. An N6-carboxylysine modification is found at Lys219. Residue His221 coordinates substrate. Residues His248 and His274 each coordinate Ni(2+). His321 functions as the Proton donor in the catalytic mechanism. Position 361 (Asp361) interacts with Ni(2+).

This sequence belongs to the metallo-dependent hydrolases superfamily. Urease alpha subunit family. Heterohexamer of 3 UreA (alpha) and 3 UreB (beta) subunits. Ni cation serves as cofactor. Carboxylation allows a single lysine to coordinate two nickel ions.

The protein resides in the cytoplasm. The enzyme catalyses urea + 2 H2O + H(+) = hydrogencarbonate + 2 NH4(+). It participates in nitrogen metabolism; urea degradation; CO(2) and NH(3) from urea (urease route): step 1/1. The chain is Urease subunit beta from Helicobacter heilmannii.